The sequence spans 464 residues: Cerebellar degeneration-related protein 2-like (464 aa).

3 coiled-coil regions span residues 31–154 (AAEL…RRKT), 201–264 (VSSL…KSRV), and 342–379 (MSIL…AEVQ). Positions 371–419 (ESLRHAEVQTSRPVSRDPSMKECRVAEPQQPPPTPPQTPSTPEALEGIS) are disordered. Basic and acidic residues predominate over residues 384 to 395 (VSRDPSMKECRV). The span at 399-409 (QQPPPTPPQTP) shows a compositional bias: pro residues.

Belongs to the CDR2 family.

The protein is Cerebellar degeneration-related protein 2-like (cdr2l) of Danio rerio (Zebrafish).